We begin with the raw amino-acid sequence, 245 residues long: 3-deoxy-manno-octulosonate cytidylyltransferase (245 aa).

Belongs to the KdsB family.

The protein localises to the cytoplasm. It carries out the reaction 3-deoxy-alpha-D-manno-oct-2-ulosonate + CTP = CMP-3-deoxy-beta-D-manno-octulosonate + diphosphate. It functions in the pathway nucleotide-sugar biosynthesis; CMP-3-deoxy-D-manno-octulosonate biosynthesis; CMP-3-deoxy-D-manno-octulosonate from 3-deoxy-D-manno-octulosonate and CTP: step 1/1. Its pathway is bacterial outer membrane biogenesis; lipopolysaccharide biosynthesis. Activates KDO (a required 8-carbon sugar) for incorporation into bacterial lipopolysaccharide in Gram-negative bacteria. The polypeptide is 3-deoxy-manno-octulosonate cytidylyltransferase (Elusimicrobium minutum (strain Pei191)).